A 257-amino-acid polypeptide reads, in one-letter code: Phosphatidylglycerol--prolipoprotein diacylglyceryl transferase (257 aa).

7 helical membrane passes run 13–33 (IGPIDVHWYGIFMAISIAIGG), 49–69 (FLLNLLMIVVISGVVGARLMF), 88–108 (IYEGGLSWHGAVLGGFLAGLY), 123–143 (FAVLGLSIGNILVRIGNIFNQ), 152–172 (FAFGRWPAQLVGVAMGIILLI), 185–202 (GYQFWSFIFYYQLMRGLI), and 223–243 (IGFFTLTQLVTPFILILAYWM). R136 contributes to the a 1,2-diacyl-sn-glycero-3-phospho-(1'-sn-glycerol) binding site.

This sequence belongs to the Lgt family.

Its subcellular location is the cell membrane. It catalyses the reaction L-cysteinyl-[prolipoprotein] + a 1,2-diacyl-sn-glycero-3-phospho-(1'-sn-glycerol) = an S-1,2-diacyl-sn-glyceryl-L-cysteinyl-[prolipoprotein] + sn-glycerol 1-phosphate + H(+). It participates in protein modification; lipoprotein biosynthesis (diacylglyceryl transfer). Functionally, catalyzes the transfer of the diacylglyceryl group from phosphatidylglycerol to the sulfhydryl group of the N-terminal cysteine of a prolipoprotein, the first step in the formation of mature lipoproteins. The sequence is that of Phosphatidylglycerol--prolipoprotein diacylglyceryl transferase from Thermoanaerobacter pseudethanolicus (strain ATCC 33223 / 39E) (Clostridium thermohydrosulfuricum).